Reading from the N-terminus, the 166-residue chain is Endoribonuclease YbeY (166 aa).

Positions 132, 136, and 142 each coordinate Zn(2+).

This sequence belongs to the endoribonuclease YbeY family. Zn(2+) serves as cofactor.

The protein localises to the cytoplasm. Its function is as follows. Single strand-specific metallo-endoribonuclease involved in late-stage 70S ribosome quality control and in maturation of the 3' terminus of the 16S rRNA. The chain is Endoribonuclease YbeY from Clostridium botulinum (strain ATCC 19397 / Type A).